Consider the following 268-residue polypeptide: Ribosomal RNA small subunit methyltransferase A (268 aa).

S-adenosyl-L-methionine contacts are provided by Asn18, Leu20, Gly45, Glu66, Asp91, and Asn112.

This sequence belongs to the class I-like SAM-binding methyltransferase superfamily. rRNA adenine N(6)-methyltransferase family. RsmA subfamily.

It localises to the cytoplasm. The catalysed reaction is adenosine(1518)/adenosine(1519) in 16S rRNA + 4 S-adenosyl-L-methionine = N(6)-dimethyladenosine(1518)/N(6)-dimethyladenosine(1519) in 16S rRNA + 4 S-adenosyl-L-homocysteine + 4 H(+). Specifically dimethylates two adjacent adenosines (A1518 and A1519) in the loop of a conserved hairpin near the 3'-end of 16S rRNA in the 30S particle. May play a critical role in biogenesis of 30S subunits. The sequence is that of Ribosomal RNA small subunit methyltransferase A from Pseudoalteromonas translucida (strain TAC 125).